Reading from the N-terminus, the 610-residue chain is UvrABC system protein C (610 aa).

In terms of domain architecture, GIY-YIG spans serine 16 to valine 94. In terms of domain architecture, UVR spans aspartate 204 to valine 239.

The protein belongs to the UvrC family. Interacts with UvrB in an incision complex.

The protein resides in the cytoplasm. In terms of biological role, the UvrABC repair system catalyzes the recognition and processing of DNA lesions. UvrC both incises the 5' and 3' sides of the lesion. The N-terminal half is responsible for the 3' incision and the C-terminal half is responsible for the 5' incision. The chain is UvrABC system protein C from Salmonella typhi.